We begin with the raw amino-acid sequence, 704 residues long: Pentatricopeptide repeat-containing protein At1g56690, mitochondrial (704 aa).

Residues 1 to 12 (MKRLKLILRRTY) constitute a mitochondrion transit peptide. 15 PPR repeats span residues 16–46 (TGVN…LQFK), 47–81 (AIGS…NVVS), 82–108 (WNGL…MPER), 109–143 (NVVS…NEVS), 144–170 (WTVM…MPVK), 171–205 (DVVA…NVVT), 206–232 (WTTM…MPEK), 233–267 (TEVS…PVIA), 268–294 (CNAM…MEDR), 295–329 (DNAT…GVRP), 330–364 (SFPS…QFDD), 365–395 (DVYV…FSSK), 396–430 (DIIM…GTMP), 431–465 (NKVT…FCVT), and 467–497 (TVEH…MTIK). A type E motif region spans residues 502–577 (VWGALLGACK…FPGCSWIEVG (76 aa)). The interval 578–609 (KKVHMFTRGGIKNHPEQAMILMMLEKTDGLLR) is type E(+) motif. A type DYW motif region spans residues 610 to 704 (EAGYSPDCSH…NGECSCRDYW (95 aa)).

It belongs to the PPR family. PCMP-H subfamily.

The protein resides in the mitochondrion. The chain is Pentatricopeptide repeat-containing protein At1g56690, mitochondrial (PCMP-H69) from Arabidopsis thaliana (Mouse-ear cress).